We begin with the raw amino-acid sequence, 453 residues long: Serine incorporator 1 (453 aa).

The N-myristoyl glycine moiety is linked to residue G2. The Cytoplasmic portion of the chain corresponds to 2–39; the sequence is GSVLGLCSMASWIPCLCGSAPCLLCRCCPSGNNSTVTR. A helical transmembrane segment spans residues 40–60; the sequence is LIYALFLLVGVCVACVMLIPG. At 61–88 the chain is on the lumenal side; that stretch reads MEEQLNKIPGFCENEKGVVPCNILVGYK. A helical membrane pass occupies residues 89–109; it reads AVYRLCFGLAMFYLLLSLLMI. Residues 110–123 are Cytoplasmic-facing; the sequence is KVKSSSDPRAAVHN. The chain crosses the membrane as a helical span at residues 124–144; the sequence is GFWFFKFAAAIAIIIGAFFIP. Residues 145–151 are Lumenal-facing; it reads EGTFTTV. Residues 152 to 172 form a helical membrane-spanning segment; sequence WFYVGMAGAFCFILIQLVLLI. The Cytoplasmic portion of the chain corresponds to 173–197; it reads DFAHSWNESWVEKMEEGNSRCWYAA. Residues 198–218 traverse the membrane as a helical segment; the sequence is LLSATALNYLLSLVAIVLFFV. Residues 219–231 are Lumenal-facing; that stretch reads YYTHPASCSENKA. Residues 232-252 traverse the membrane as a helical segment; sequence FISVNMLLCIGASVMSILPKI. Topologically, residues 253-259 are cytoplasmic; sequence QESQPRS. A helical transmembrane segment spans residues 260–280; it reads GLLQSSVITVYTMYLTWSAMT. At 281–309 the chain is on the lumenal side; it reads NEPETNCNPSLLSIIGYNTTSTVPKEGQS. Residues 310–330 form a helical membrane-spanning segment; the sequence is VQWWHAQGIIGLILFLLCVFY. The Cytoplasmic portion of the chain corresponds to 331–387; that stretch reads SSIRTSNNSQVNKLTLTSDESTLIEDGGARSDGSLEDGDDVHRAVDNERDGVTYSYS. S351 is subject to Phosphoserine. T352 is subject to Phosphothreonine. S361 and S364 each carry phosphoserine. A helical membrane pass occupies residues 388-408; the sequence is FFHFMLFLASLYIMMTLTNWY. Over 409 to 426 the chain is Lumenal; the sequence is RYEPSREMKSQWTAVWVK. A helical transmembrane segment spans residues 427–447; the sequence is ISSSWIGIVLYVWTLVAPLVL. Residues 448–453 lie on the Cytoplasmic side of the membrane; sequence TNRDFD.

This sequence belongs to the TDE1 family. As to quaternary structure, interacts with SPTLC1.

Its subcellular location is the endoplasmic reticulum membrane. Its function is as follows. Enhances the incorporation of serine into phosphatidylserine and sphingolipids. The sequence is that of Serine incorporator 1 (SERINC1) from Pongo abelii (Sumatran orangutan).